We begin with the raw amino-acid sequence, 580 residues long: MAGLPVRDPAVDRSLRSVFVGNIPYEATEEQLKDIFSEVGPVVSFRLVYDRETGKPKGYGFCEYQDQETALSAMRNLNGREFSGRALRVDNAASEKNKEELKSLGTGAPVIESPYGESISPEDAPESISKAVASLPPEQMFELMKQMKLCVQNSPQEARNMLLQNPQLAYALLQAQVVMRIVDPEIALKILHRQTNIPTLISGNPQPVHVAGPGSGPNVSMNQQNPQAPQAQSLGGMHVNGAPPMMQASMPGGVPAPVQMAAAVGGPGPGSLAPAGVMQAQVGMQGAGPVPMERGQVPMQDPRAAMQRGALPTNVPTPRGLLGDAPNDPRGGTLMTVTGDVEPRAYLGPPPPPHQGPPMHHVPGHEGRGPPPHDMRGGPLAEPRPLMAEPRGPMLDQRGPPLDARGGRDPRGLDARGMEARAMEARGLDARGLEARAMEARAMEARAMEARAMEARAMEARAMEARGMDTRGPVPGPRGPMPSGIQGPNPMNMGAVVPQGSRQVPVMQGAGMQGASMQGGSQPGGFSPGQSQVTPQDHEKAALIMQVLQLTADQIAMLPPEQRQSILILKEQIQKSTGAP.

Serine 14 is modified (phosphoserine). One can recognise an RRM domain in the interval arginine 16 to serine 94. The interactions with CSTF3 and SYMPK stretch occupies residues alanine 108–alanine 248. Lysine 189 is covalently cross-linked (Glycyl lysine isopeptide (Lys-Gly) (interchain with G-Cter in SUMO2)). Arginine 308 is modified (omega-N-methylarginine). Disordered regions lie at residues leucine 311–glycine 331 and leucine 347–aspartate 414. Composition is skewed to basic and acidic residues over residues proline 363 to arginine 376 and arginine 405 to aspartate 414. A 1; approximate repeat occupies leucine 413–glycine 417. Positions leucine 413 to glycine 472 are 12 X 5 AA tandem repeats of M-E-A-R-[AG]. Repeat copies occupy residues methionine 418–alanine 422 and methionine 423–glycine 427. The stretch at leucine 428–glycine 432 is one 4; approximate repeat. A 5; approximate repeat occupies leucine 433–alanine 437. A run of 6 repeats spans residues methionine 438–alanine 442, methionine 443–alanine 447, methionine 448–alanine 452, methionine 453–alanine 457, methionine 458–alanine 462, and methionine 463–glycine 467. A 12; approximate repeat occupies methionine 468–glycine 472. Omega-N-methylarginine occurs at positions 471 and 478. Residues methionine 512–glutamine 536 are disordered. The interval methionine 517 to proline 580 is interaction with RPO2TC1. Phosphoserine is present on residues serine 521 and serine 527.

As to quaternary structure, the CSTF complex is composed of CSTF1 (50 kDa subunit), CSTF2 (64 kDa subunit) and CSTF3 (77 kDa subunit). CSTF2 directly interacts with CSTF3, SYMPK and RPO2TC1. Interacts with HSF1 in heat-stressed cells. Interacts with CPSF2, CPSF3 and FIP1L1. Interacts with DDX1. In terms of tissue distribution, expressed in most somatic cell types (at protein level). Highly expressed in testis, except in meiotic spermatocytes.

The protein localises to the nucleus. In terms of biological role, one of the multiple factors required for polyadenylation and 3'-end cleavage of mammalian pre-mRNAs. This subunit is directly involved in the binding to pre-mRNAs. In Mus musculus (Mouse), this protein is Cleavage stimulation factor subunit 2 (Cstf2).